Consider the following 179-residue polypeptide: MELQGAQEDLGISLSSPRRNHETRPGSKAKGRSSICLQASVWMAGGKLRLRASEHLTQGHQQELRDWNLGEDASLLFSKSPFGAGKLIQAPAHVFRQCWVQGNAWISCITKFDSKRSPEVASSPSYLTVPRRSPLPVFLRPSDRCVCGGCYLGKSTRRRACQSLLSDPLGVTFPTQTRP.

The tract at residues 1–32 (MELQGAQEDLGISLSSPRRNHETRPGSKAKGR) is disordered.

This is an uncharacterized protein from Homo sapiens (Human).